A 361-amino-acid polypeptide reads, in one-letter code: Phospho-N-acetylmuramoyl-pentapeptide-transferase (361 aa).

10 helical membrane passes run 28–48 (LAII…IEFL), 74–94 (TMGG…LADL), 99–119 (IWIT…DDYA), 133–153 (SKLL…EYLD), 168–188 (LSLD…VGSS), 203–223 (VPIA…GNLI), 236–256 (TGEL…FLWF), 263–283 (VFMG…ISVI), 288–308 (IVLA…ILQV), and 338–358 (KVVI…LSSL).

It belongs to the glycosyltransferase 4 family. MraY subfamily. Requires Mg(2+) as cofactor.

It is found in the cell inner membrane. The enzyme catalyses UDP-N-acetyl-alpha-D-muramoyl-L-alanyl-gamma-D-glutamyl-meso-2,6-diaminopimeloyl-D-alanyl-D-alanine + di-trans,octa-cis-undecaprenyl phosphate = di-trans,octa-cis-undecaprenyl diphospho-N-acetyl-alpha-D-muramoyl-L-alanyl-D-glutamyl-meso-2,6-diaminopimeloyl-D-alanyl-D-alanine + UMP. Its pathway is cell wall biogenesis; peptidoglycan biosynthesis. Functionally, catalyzes the initial step of the lipid cycle reactions in the biosynthesis of the cell wall peptidoglycan: transfers peptidoglycan precursor phospho-MurNAc-pentapeptide from UDP-MurNAc-pentapeptide onto the lipid carrier undecaprenyl phosphate, yielding undecaprenyl-pyrophosphoryl-MurNAc-pentapeptide, known as lipid I. The sequence is that of Phospho-N-acetylmuramoyl-pentapeptide-transferase from Rickettsia africae (strain ESF-5).